Consider the following 432-residue polypeptide: Asparagine--tRNA ligase (432 aa).

It belongs to the class-II aminoacyl-tRNA synthetase family. In terms of assembly, homodimer.

It is found in the cytoplasm. The catalysed reaction is tRNA(Asn) + L-asparagine + ATP = L-asparaginyl-tRNA(Asn) + AMP + diphosphate + H(+). The protein is Asparagine--tRNA ligase of Lactobacillus johnsonii (strain CNCM I-12250 / La1 / NCC 533).